The sequence spans 304 residues: GTPase Era (304 aa).

One can recognise an Era-type G domain in the interval 7–178; that stretch reads KCGVVAVLGA…KNALAALMPE (172 aa). The segment at 15 to 22 is G1; sequence GAPNAGKS. 15 to 22 contributes to the GTP binding site; sequence GAPNAGKS. The interval 41–45 is G2; the sequence is QTTRA. The G3 stretch occupies residues 66–69; that stretch reads DTPG. GTP is bound by residues 66–70 and 128–131; these read DTPGI and NKVD. Positions 128–131 are G4; the sequence is NKVD. A G5 region spans residues 157–159; that stretch reads VSA. The KH type-2 domain occupies 209–286; it reads LHEELPYDSA…HLFLHVKVDE (78 aa).

Belongs to the TRAFAC class TrmE-Era-EngA-EngB-Septin-like GTPase superfamily. Era GTPase family. As to quaternary structure, monomer.

It localises to the cytoplasm. It is found in the cell inner membrane. Its function is as follows. An essential GTPase that binds both GDP and GTP, with rapid nucleotide exchange. Plays a role in 16S rRNA processing and 30S ribosomal subunit biogenesis and possibly also in cell cycle regulation and energy metabolism. This chain is GTPase Era, found in Erythrobacter litoralis (strain HTCC2594).